The sequence spans 66 residues: Large ribosomal subunit protein bL35 (66 aa).

The segment covering 1-14 has biased composition (basic residues); that stretch reads MPKMKTKSAAKKRF. The disordered stretch occupies residues 1–34; sequence MPKMKTKSAAKKRFSMTATGKVKAGPAGKRHGMI.

The protein belongs to the bacterial ribosomal protein bL35 family.

The polypeptide is Large ribosomal subunit protein bL35 (Paracoccus denitrificans (strain Pd 1222)).